Reading from the N-terminus, the 154-residue chain is 6,7-dimethyl-8-ribityllumazine synthase (154 aa).

Residues F22, 56-58 (AFE), and 80-82 (AVI) contribute to the 5-amino-6-(D-ribitylamino)uracil site. 85–86 (ET) serves as a coordination point for (2S)-2-hydroxy-3-oxobutyl phosphate. The active-site Proton donor is the H88. F113 is a binding site for 5-amino-6-(D-ribitylamino)uracil. R127 provides a ligand contact to (2S)-2-hydroxy-3-oxobutyl phosphate.

It belongs to the DMRL synthase family.

The enzyme catalyses (2S)-2-hydroxy-3-oxobutyl phosphate + 5-amino-6-(D-ribitylamino)uracil = 6,7-dimethyl-8-(1-D-ribityl)lumazine + phosphate + 2 H2O + H(+). Its pathway is cofactor biosynthesis; riboflavin biosynthesis; riboflavin from 2-hydroxy-3-oxobutyl phosphate and 5-amino-6-(D-ribitylamino)uracil: step 1/2. Functionally, catalyzes the formation of 6,7-dimethyl-8-ribityllumazine by condensation of 5-amino-6-(D-ribitylamino)uracil with 3,4-dihydroxy-2-butanone 4-phosphate. This is the penultimate step in the biosynthesis of riboflavin. The protein is 6,7-dimethyl-8-ribityllumazine synthase of Thermoanaerobacter sp. (strain X514).